The primary structure comprises 133 residues: Nickel-responsive regulator (133 aa).

Residues histidine 76, histidine 87, histidine 89, and cysteine 95 each contribute to the Ni(2+) site.

Belongs to the transcriptional regulatory CopG/NikR family. As to quaternary structure, homotetramer. The cofactor is Ni(2+).

Transcriptional repressor of the nikABCDE operon. Is active in the presence of excessive concentrations of intracellular nickel. In Salmonella arizonae (strain ATCC BAA-731 / CDC346-86 / RSK2980), this protein is Nickel-responsive regulator.